Here is a 277-residue protein sequence, read N- to C-terminus: Proteasome assembly chaperone 1 (277 aa).

Belongs to the PSMG1 family. As to quaternary structure, forms a heterodimer with psmg2. In terms of processing, degraded by the proteasome upon completion of 20S proteasome maturation.

Its subcellular location is the cytoplasm. The protein localises to the endoplasmic reticulum. In terms of biological role, chaperone protein which promotes assembly of the 20S proteasome as part of a heterodimer with psmg2. The sequence is that of Proteasome assembly chaperone 1 from Danio rerio (Zebrafish).